Consider the following 94-residue polypeptide: MSLFDFFRRPTSAPVARERLQILLAHERAVIGRSDLIAILREEILAVIAKHVTMEPEKVNVKMERGDTVSTLEVEVEVPTSATARAGKKVVEAA.

Belongs to the MinE family.

Its function is as follows. Prevents the cell division inhibition by proteins MinC and MinD at internal division sites while permitting inhibition at polar sites. This ensures cell division at the proper site by restricting the formation of a division septum at the midpoint of the long axis of the cell. The chain is Cell division topological specificity factor from Beijerinckia indica subsp. indica (strain ATCC 9039 / DSM 1715 / NCIMB 8712).